We begin with the raw amino-acid sequence, 463 residues long: Putative ankyrin repeat protein R579 (463 aa).

ANK repeat units lie at residues 124–154, 156–181, 242–271, 273–299, 300–328, 329–355, 356–385, and 387–416; these read LKTD…KCTI, SITR…SENI, KEKN…QFNP, IYLW…DYRP, HIDR…VSQE, NINE…MGAD, INYK…DITT, and GSND…TITL.

This is Putative ankyrin repeat protein R579 from Acanthamoeba polyphaga (Amoeba).